The sequence spans 90 residues: Putative antitoxin VapB8 (90 aa).

Positions 1–56 are disordered; it reads MEKSRCHAVAHGGGCAGSAKSHKSGGRCGQGRGAGDSHGTRGAGRRYRAASAPHPL. The segment covering 26 to 36 has biased composition (gly residues); that stretch reads GRCGQGRGAGD.

Its function is as follows. Antitoxin component of a possible type II toxin-antitoxin (TA) system. The cognate toxin is VapC8. The chain is Putative antitoxin VapB8 (vapB8) from Mycobacterium tuberculosis (strain ATCC 25618 / H37Rv).